Consider the following 361-residue polypeptide: Homocitrate synthase (361 aa).

In terms of domain architecture, Pyruvate carboxyltransferase spans 1–251 (MVLDSTLREG…KYRLDLLYRV (251 aa)). Position 8 (Arg8) interacts with 2-oxoglutarate. Glu9 contributes to the Mg(2+) binding site. 3 residues coordinate 2-oxoglutarate: His68, Arg128, and Thr162. Residues His188 and His190 each coordinate Mg(2+). His282 (proton acceptor) is an active-site residue.

Belongs to the alpha-IPM synthase/homocitrate synthase family. Homocitrate synthase LYS20/LYS21 subfamily. The cofactor is Mg(2+). Requires Mn(2+) as cofactor.

The enzyme catalyses acetyl-CoA + 2-oxoglutarate + H2O = (2R)-homocitrate + CoA + H(+). It participates in amino-acid biosynthesis; L-lysine biosynthesis via AAA pathway; L-alpha-aminoadipate from 2-oxoglutarate: step 1/5. Functionally, catalyzes the aldol-type condensation of 2-oxoglutarate with acetyl-CoA to yield homocitrate. Carries out the first step of the alpha-aminoadipate (AAA) lysine biosynthesis pathway. The protein is Homocitrate synthase of Pyrococcus abyssi (strain GE5 / Orsay).